Consider the following 115-residue polypeptide: NADH-ubiquinone oxidoreductase chain 3 (115 aa).

M1 carries the N-formylmethionine modification. 3 consecutive transmembrane segments (helical) span residues 3-23, 55-75, and 84-104; these read LMLALLTNFTLATLLVIIAFW, FFLVAITFLLFDLEIALLLPL, and LNTMLTMALFLIILLAVSLAY.

In terms of assembly, core subunit of respiratory chain NADH dehydrogenase (Complex I) which is composed of 45 different subunits. Interacts with TMEM186. Interacts with TMEM242.

The protein resides in the mitochondrion inner membrane. It carries out the reaction a ubiquinone + NADH + 5 H(+)(in) = a ubiquinol + NAD(+) + 4 H(+)(out). Functionally, core subunit of the mitochondrial membrane respiratory chain NADH dehydrogenase (Complex I) which catalyzes electron transfer from NADH through the respiratory chain, using ubiquinone as an electron acceptor. Essential for the catalytic activity of complex I. This chain is NADH-ubiquinone oxidoreductase chain 3, found in Bos taurus (Bovine).